The primary structure comprises 428 residues: Histidinol dehydrogenase (428 aa).

Positions 124, 186, and 209 each coordinate NAD(+). Residues Ser-233, Gln-255, and His-258 each coordinate substrate. The Zn(2+) site is built by Gln-255 and His-258. Active-site proton acceptor residues include Glu-322 and His-323. Substrate contacts are provided by His-323, Asp-356, Glu-410, and His-415. Zn(2+) is bound at residue Asp-356. His-415 provides a ligand contact to Zn(2+).

The protein belongs to the histidinol dehydrogenase family. Requires Zn(2+) as cofactor.

It catalyses the reaction L-histidinol + 2 NAD(+) + H2O = L-histidine + 2 NADH + 3 H(+). It participates in amino-acid biosynthesis; L-histidine biosynthesis; L-histidine from 5-phospho-alpha-D-ribose 1-diphosphate: step 9/9. Functionally, catalyzes the sequential NAD-dependent oxidations of L-histidinol to L-histidinaldehyde and then to L-histidine. The chain is Histidinol dehydrogenase from Bacteroides fragilis (strain YCH46).